The sequence spans 196 residues: SPRY domain-containing protein 7 (196 aa).

At alanine 2 the chain carries N-acetylalanine. The B30.2/SPRY domain maps to 2–184 (AASAWCCLRC…FSEFYHTPPP (183 aa)).

In Mus musculus (Mouse), this protein is SPRY domain-containing protein 7 (Spryd7).